A 232-amino-acid chain; its full sequence is Nucleolar protein 16 (232 aa).

Basic residues predominate over residues 1-14 (MGRELQKRKKRSSR). 2 disordered regions span residues 1 to 20 (MGRE…VQTH) and 113 to 161 (RSDN…QSSR). Basic and acidic residues predominate over residues 132–154 (EEPKPKNPTHDIEWHGISDDRQE).

It belongs to the NOP16 family. As to quaternary structure, component of the pre-66S ribosomal particle.

The protein resides in the nucleus. It is found in the nucleolus. In terms of biological role, involved in the biogenesis of the 60S ribosomal subunit. The chain is Nucleolar protein 16 (nop-16) from Neurospora crassa (strain ATCC 24698 / 74-OR23-1A / CBS 708.71 / DSM 1257 / FGSC 987).